A 357-amino-acid polypeptide reads, in one-letter code: DNA integrity scanning protein DisA (357 aa).

In terms of domain architecture, DAC spans 8-146 (VKSMINILQL…GNLRYTLKDI (139 aa)). ATP contacts are provided by residues glycine 75, leucine 93, and 106-110 (MRHRT).

The protein belongs to the DisA family. Homooctamer. The cofactor is Mg(2+).

It catalyses the reaction 2 ATP = 3',3'-c-di-AMP + 2 diphosphate. Functionally, participates in a DNA-damage check-point that is active prior to asymmetric division when DNA is damaged. DisA forms globular foci that rapidly scan along the chromosomes during sporulation, searching for lesions. When a lesion is present, DisA pauses at the lesion site. This triggers a cellular response that culminates in a temporary block in sporulation initiation. Its function is as follows. Also has diadenylate cyclase activity, catalyzing the condensation of 2 ATP molecules into cyclic di-AMP (c-di-AMP). c-di-AMP acts as a signaling molecule that couples DNA integrity with progression of sporulation. The rise in c-di-AMP level generated by DisA while scanning the chromosome, operates as a positive signal that advances sporulation; upon encountering a lesion, the DisA focus arrests at the damaged site and halts c-di-AMP synthesis. This chain is DNA integrity scanning protein DisA, found in Bacillus mycoides (strain KBAB4) (Bacillus weihenstephanensis).